We begin with the raw amino-acid sequence, 467 residues long: Citrate synthase, mitochondrial (467 aa).

Residues His-301 and His-347 contribute to the active site.

Belongs to the citrate synthase family.

It localises to the mitochondrion matrix. The catalysed reaction is oxaloacetate + acetyl-CoA + H2O = citrate + CoA + H(+). It functions in the pathway carbohydrate metabolism; tricarboxylic acid cycle; isocitrate from oxaloacetate: step 1/2. This is Citrate synthase, mitochondrial (CIT) from Candida tropicalis (Yeast).